The sequence spans 82 residues: Putative membrane protein insertion efficiency factor (82 aa).

The segment at 61–82 (HEGGYDPVPKRKNKNSEGKREE) is disordered.

The protein belongs to the UPF0161 family.

Its subcellular location is the cell inner membrane. In terms of biological role, could be involved in insertion of integral membrane proteins into the membrane. In Fusobacterium nucleatum subsp. nucleatum (strain ATCC 25586 / DSM 15643 / BCRC 10681 / CIP 101130 / JCM 8532 / KCTC 2640 / LMG 13131 / VPI 4355), this protein is Putative membrane protein insertion efficiency factor.